The following is a 181-amino-acid chain: Inner membrane-spanning protein YciB (181 aa).

5 consecutive transmembrane segments (helical) span residues Phe-8–Ala-28, Ile-53–Phe-73, Trp-76–Gly-96, Leu-121–Phe-141, and Phe-149–Ile-169.

It belongs to the YciB family.

It is found in the cell inner membrane. Plays a role in cell envelope biogenesis, maintenance of cell envelope integrity and membrane homeostasis. This is Inner membrane-spanning protein YciB from Coxiella burnetii (strain RSA 331 / Henzerling II).